Here is a 607-residue protein sequence, read N- to C-terminus: Arginine--tRNA ligase (607 aa).

Residues 147-157 carry the 'HIGH' region motif; the sequence is PNIAKEMHVGH.

Belongs to the class-I aminoacyl-tRNA synthetase family. As to quaternary structure, monomer.

It localises to the cytoplasm. The catalysed reaction is tRNA(Arg) + L-arginine + ATP = L-arginyl-tRNA(Arg) + AMP + diphosphate. The sequence is that of Arginine--tRNA ligase from Prochlorococcus marinus (strain NATL1A).